A 213-amino-acid polypeptide reads, in one-letter code: Orotate phosphoribosyltransferase (213 aa).

Lys-26 provides a ligand contact to 5-phospho-alpha-D-ribose 1-diphosphate. An orotate-binding site is contributed by 34-35; sequence FF. Residues 72-73, Arg-98, Lys-99, Lys-102, His-104, and 123-131 each bind 5-phospho-alpha-D-ribose 1-diphosphate; these read YK and DDVISAGTS. Orotate contacts are provided by Ser-127 and Arg-155.

The protein belongs to the purine/pyrimidine phosphoribosyltransferase family. PyrE subfamily. As to quaternary structure, homodimer. It depends on Mg(2+) as a cofactor.

It carries out the reaction orotidine 5'-phosphate + diphosphate = orotate + 5-phospho-alpha-D-ribose 1-diphosphate. Its pathway is pyrimidine metabolism; UMP biosynthesis via de novo pathway; UMP from orotate: step 1/2. Functionally, catalyzes the transfer of a ribosyl phosphate group from 5-phosphoribose 1-diphosphate to orotate, leading to the formation of orotidine monophosphate (OMP). The sequence is that of Orotate phosphoribosyltransferase from Neisseria meningitidis serogroup C (strain 053442).